The sequence spans 303 residues: Elongation factor Ts (303 aa).

An involved in Mg(2+) ion dislocation from EF-Tu region spans residues 80–83 (TDFV).

Belongs to the EF-Ts family.

The protein localises to the cytoplasm. Its function is as follows. Associates with the EF-Tu.GDP complex and induces the exchange of GDP to GTP. It remains bound to the aminoacyl-tRNA.EF-Tu.GTP complex up to the GTP hydrolysis stage on the ribosome. In Clostridium botulinum (strain Alaska E43 / Type E3), this protein is Elongation factor Ts.